We begin with the raw amino-acid sequence, 387 residues long: GDSL esterase/lipase At2g23540 (387 aa).

A signal peptide spans 1-32 (MATRASTSSRVSPAFTFLVIFFLLSLTASVEA). Residue Ser55 is the Nucleophile of the active site. Asn139 and Asn159 each carry an N-linked (GlcNAc...) asparagine glycan. Active-site residues include Asp352 and His355. Asn380 carries an N-linked (GlcNAc...) asparagine glycan.

This sequence belongs to the 'GDSL' lipolytic enzyme family.

The protein resides in the secreted. The polypeptide is GDSL esterase/lipase At2g23540 (Arabidopsis thaliana (Mouse-ear cress)).